Reading from the N-terminus, the 1605-residue chain is Ribosome-binding protein 1 (1605 aa).

At 1–7 the chain is on the lumenal side; sequence MDIYDTQ. The helical transmembrane segment at 8-28 threads the bilayer; it reads TLGVVVFGGFMVVSAIGIFLV. The Cytoplasmic portion of the chain corresponds to 29–1605; sequence STFSMKETSY…GSSSKEGTSV (1577 aa). Residues 44-88 form a disordered region; it reads NQRKEMAKTHHQKGEKKKKEKTVEKKGKTKKKEEKPNGKIPEHDL. Residues 52–63 are compositionally biased toward basic residues; the sequence is THHQKGEKKKKE. Residues 64–88 are compositionally biased toward basic and acidic residues; that stretch reads KTVEKKGKTKKKEEKPNGKIPEHDL. Phosphoserine is present on serine 111. Residues 114–150 form a disordered region; it reads SSVGHTPIATVPAMPQEKLASSPKDRKKKEKKVAKVE. Residue lysine 148 forms a Glycyl lysine isopeptide (Lys-Gly) (interchain with G-Cter in SUMO2) linkage. Serine 159 and serine 165 each carry phosphoserine. Residues 172 to 849 are disordered; the sequence is ATPKEVPMVA…PGPPDCDGPL (678 aa). Tandem repeats lie at residues 196-205, 206-215, 216-225, 226-235, 236-245, 246-255, 256-265, 266-275, 276-285, 286-295, 296-305, 306-315, 316-325, 326-335, 336-345, 346-355, 356-365, 366-375, 376-385, 386-395, 396-405, 406-415, 416-425, 426-435, 436-445, 446-455, 456-465, 466-475, 476-485, 486-495, 496-505, 506-515, 516-525, 527-536, 537-546, 547-556, 557-566, 567-576, 577-586, 587-596, 597-606, 607-616, 617-626, 628-637, 638-647, 648-657, 658-667, 668-677, 678-687, 688-697, 698-707, 708-717, 718-727, 729-738, 739-748, 749-758, 759-768, 769-778, 779-788, 789-798, and 799-808. The 61 X 10 AA tandem repeats of [NSQ]-[NKQVGA]-[GSAQKRT]-[ASGDTK]-[KGTQSAV]-[KGAED]-[EQVGIPTDMA]-[EGVAS]-[AGVPETNS]-[AQNGPTVS] stretch occupies residues 196–808; it reads SQGKKGQGAQ…QGKKSEMAPA (613 aa). The span at 197–208 shows a compositional bias: low complexity; it reads QGKKGQGAQNQA. 4 stretches are compositionally biased toward polar residues: residues 224–258, 274–338, 354–378, and 385–399; these read AQNQ…QNQA. Residues 420 to 433 show a composition bias toward basic and acidic residues; the sequence is KKGEAAQKQDKKIE. Composition is skewed to polar residues over residues 435-479, 495-519, and 526-540; these read AQNQ…QNQA. Over residues 561–574 the composition is skewed to basic and acidic residues; that stretch reads KKGEAAQKQDKKIE. 2 stretches are compositionally biased toward polar residues: residues 576 to 720 and 736 to 769; these read AQNQ…QNQG and ASNQ…SPNQ. The residue at position 786 (serine 786) is a Phosphoserine. A compositionally biased stretch (polar residues) spans 811–821; it reads QKASMVQSQEA. Serine 818 is modified (phosphoserine). Lysine 823 is covalently cross-linked (Glycyl lysine isopeptide (Lys-Gly) (interchain with G-Cter in SUMO1)). Residue lysine 1135 is modified to N6-acetyllysine. 2 positions are modified to phosphoserine: serine 1162 and serine 1178. Disordered stretches follow at residues 1460–1481 and 1571–1605; these read MRSH…AEQD and TTQE…GTSV. Basic and acidic residues predominate over residues 1576–1598; that stretch reads LTKEKDTVKKLQEQLGKAEDGSS.

Widely expressed.

Its subcellular location is the endoplasmic reticulum membrane. Acts as a ribosome receptor and mediates interaction between the ribosome and the endoplasmic reticulum membrane. In Mus musculus (Mouse), this protein is Ribosome-binding protein 1 (Rrbp1).